Reading from the N-terminus, the 546-residue chain is Chaperonin GroEL 2 (546 aa).

Residues 30–33 (TLGP), lysine 51, 87–91 (DGTTT), glycine 415, and aspartate 496 each bind ATP.

The protein belongs to the chaperonin (HSP60) family. In terms of assembly, forms a cylinder of 14 subunits composed of two heptameric rings stacked back-to-back. Interacts with the co-chaperonin GroES.

Its subcellular location is the cytoplasm. It catalyses the reaction ATP + H2O + a folded polypeptide = ADP + phosphate + an unfolded polypeptide.. In terms of biological role, together with its co-chaperonin GroES, plays an essential role in assisting protein folding. The GroEL-GroES system forms a nano-cage that allows encapsulation of the non-native substrate proteins and provides a physical environment optimized to promote and accelerate protein folding. The protein is Chaperonin GroEL 2 of Bradyrhizobium sp. (strain ORS 278).